The following is a 477-amino-acid chain: Cytoplasmic 60S subunit biogenesis factor ZNF622 (477 aa).

Residue alanine 2 is modified to N-acetylalanine. U1-type zinc fingers lie at residues 4-28 (YTCI…TDWH) and 67-91 (TYCT…SRRH). The disordered stretch occupies residues 135–212 (AIKAQPSMSP…EDLDGDDWED (78 aa)). The segment covering 167–178 (GTHDRDPSEKPP) has biased composition (basic and acidic residues). Residues 196 to 212 (EDSEEEEEDLDGDDWED) show a composition bias toward acidic residues. Serine 276 carries the phosphoserine modification.

Belongs to the REI1 family. Homo- and heterodimer. Associates with pre-60S ribosomal particles. Interacts with MELK and MYBL2. Interacts with DNAJC21. Post-translationally, phosphorylated by MELK. The phosphorylation may redirect the protein to the nucleus. In terms of processing, ubiquitinated by HECTD1, leading to its degradation. Expressed in lung, kidney, spleen, liver and brain with lowest expression in kidney.

The protein localises to the cytoplasm. Its subcellular location is the nucleus. In terms of biological role, pre-60S-associated cytoplasmic factor involved in the cytoplasmic maturation of the 60S subunit. This Homo sapiens (Human) protein is Cytoplasmic 60S subunit biogenesis factor ZNF622.